The chain runs to 301 residues: MKIAVLSRNPRLYSTRRLVEAGQQRGHEMQVIDTLRAYMNIASHKPQIHYRGRALEGFDAVIPRIGASVTFYGCAVLRQFEMMGVYPLNESVAISRSRDKLRALQLLSRKGIGLPVTGFAHSPDDIPDLIQMVGGAPLVIKVLEGTQGMGVVLAETTKAAESVIEAFFGLKQDIMVQEYIQEAGGADIRCFVVGDKVIASMKRQAKAGEFRSNLHRGGSASLIKITPEERMTAVRAAKVMGLNVAGVDILRSNHGPLVMEVNSSPGLEGIETTTGKDVAGMIIQYLEKNAEPGQTRTKGRG.

An ATP-grasp domain is found at 104 to 287 (LQLLSRKGIG…VAGMIIQYLE (184 aa)). ATP is bound by residues Lys-141, 178 to 179 (EY), Asp-187, and 211 to 213 (RSN). Mg(2+) contacts are provided by Asp-248, Glu-260, and Asn-262. Mn(2+) contacts are provided by Asp-248, Glu-260, and Asn-262.

The protein belongs to the RimK family. Mg(2+) is required as a cofactor. The cofactor is Mn(2+).

The chain is Probable alpha-L-glutamate ligase from Ectopseudomonas mendocina (strain ymp) (Pseudomonas mendocina).